The chain runs to 331 residues: 6-phosphogluconolactonase (331 aa).

Position 287 is an N6-acetyllysine (Lys-287).

It belongs to the cycloisomerase 2 family.

The enzyme catalyses 6-phospho-D-glucono-1,5-lactone + H2O = 6-phospho-D-gluconate + H(+). Its pathway is carbohydrate degradation; pentose phosphate pathway; D-ribulose 5-phosphate from D-glucose 6-phosphate (oxidative stage): step 2/3. In terms of biological role, catalyzes the hydrolysis of 6-phosphogluconolactone to 6-phosphogluconate. In Escherichia coli O8 (strain IAI1), this protein is 6-phosphogluconolactonase.